Reading from the N-terminus, the 2145-residue chain is Glutamate synthase [NADH] (2145 aa).

A propeptide spanning residues 1–53 is cleaved from the precursor; the sequence is MPVLKSDNFDPLEEAYEGGTIQNYNDEHHLHKSWANVIPDKRGLYDPDYEHDA. Cysteine 54 functions as the For GATase activity in the catalytic mechanism. Residues 54-455 form the Glutamine amidotransferase type-2 domain; the sequence is CGVGFVANKH…PGDLFLVDTQ (402 aa). 1132–1189 is a binding site for FMN; sequence LAETHQTLVLNDLRRNVVVQTDGQLRTGFDIAVAVLLGAESFTLATVPLIAMGCVMLR. [3Fe-4S] cluster is bound by residues cysteine 1185, cysteine 1191, and cysteine 1196. The stretch at 1551–1600 forms a coiled coil; sequence KKVLLKEKAEAAKAKAKATSEYLKKFRSNQEVDDEVNTLLIANQKAKEQE. 1928 to 1942 is an NAD(+) binding site; sequence GGGDTGNDCLGTSVR. Threonine 2070 carries the post-translational modification Phosphothreonine.

This sequence belongs to the glutamate synthase family. Homotrimer. The cofactor is [3Fe-4S] cluster. It depends on FAD as a cofactor. FMN is required as a cofactor.

The enzyme catalyses 2 L-glutamate + NAD(+) = L-glutamine + 2-oxoglutarate + NADH + H(+). Its pathway is amino-acid biosynthesis; L-glutamate biosynthesis via GLT pathway; L-glutamate from 2-oxoglutarate and L-glutamine (NAD(+) route): step 1/1. It functions in the pathway energy metabolism; nitrogen metabolism. Inhibited by homocysteine sulfonamide. Forms L-glutamate from L-glutamine and 2-oxoglutarate. Represents an alternative pathway to L-glutamate dehydrogenase for the biosynthesis of L-glutamate. Participates with glutamine synthetase in ammonia assimilation processes. The enzyme is specific for NADH, L-glutamine and 2-oxoglutarate. The polypeptide is Glutamate synthase [NADH] (GLT1) (Saccharomyces cerevisiae (strain ATCC 204508 / S288c) (Baker's yeast)).